The primary structure comprises 270 residues: Type III pantothenate kinase (270 aa).

Position 6-13 (6-13 (DAGNTNIV)) interacts with ATP. 107–110 (GADR) contributes to the substrate binding site. The active-site Proton acceptor is the D109. D129 contributes to the K(+) binding site. T132 is a binding site for ATP. T184 lines the substrate pocket.

It belongs to the type III pantothenate kinase family. Homodimer. The cofactor is NH4(+). Requires K(+) as cofactor.

Its subcellular location is the cytoplasm. It carries out the reaction (R)-pantothenate + ATP = (R)-4'-phosphopantothenate + ADP + H(+). Its pathway is cofactor biosynthesis; coenzyme A biosynthesis; CoA from (R)-pantothenate: step 1/5. Functionally, catalyzes the phosphorylation of pantothenate (Pan), the first step in CoA biosynthesis. This Gluconobacter oxydans (strain 621H) (Gluconobacter suboxydans) protein is Type III pantothenate kinase.